Consider the following 401-residue polypeptide: Inactive (1R,4R,5S)-(-)-guaia-6,10(14)-diene synthase (401 aa).

Residues 1 to 20 are disordered; the sequence is MVKFDSGSESEMTNGDELHI. Mg(2+) is bound by residues Asp134 and Glu139. The short motif at 134–138 is the DDXXD motif element; sequence DDQFD. Position 242 (Arg242) interacts with substrate. A Mg(2+)-binding site is contributed by Ser292. Lys295 lines the substrate pocket. Asp296 is a Mg(2+) binding site. Substrate is bound at residue 375 to 376; that stretch reads RY.

It belongs to the terpene synthase family. The cofactor is Mg(2+).

In Gibberella fujikuroi (strain CBS 195.34 / IMI 58289 / NRRL A-6831) (Bakanae and foot rot disease fungus), this protein is Inactive (1R,4R,5S)-(-)-guaia-6,10(14)-diene synthase.